Consider the following 116-residue polypeptide: Large ribosomal subunit protein uL18 (116 aa).

The protein belongs to the universal ribosomal protein uL18 family. In terms of assembly, part of the 50S ribosomal subunit; part of the 5S rRNA/L5/L18/L25 subcomplex. Contacts the 5S and 23S rRNAs.

Its function is as follows. This is one of the proteins that bind and probably mediate the attachment of the 5S RNA into the large ribosomal subunit, where it forms part of the central protuberance. In Pseudomonas aeruginosa (strain UCBPP-PA14), this protein is Large ribosomal subunit protein uL18.